The sequence spans 822 residues: Valine--tRNA ligase (822 aa).

A 'HIGH' region motif is present at residues 41–51 (PNVTGQLHLGH). The 'KMSKS' region motif lies at 511–515 (KMSKS). ATP is bound at residue Lys514. Residues 765-822 (EQKGRELKEIQFLKSEILRAEKILTNKGFLEKAPREKIDLERTKLEKLKEKLAFYEKK) adopt a coiled-coil conformation.

It belongs to the class-I aminoacyl-tRNA synthetase family. ValS type 1 subfamily. As to quaternary structure, monomer.

Its subcellular location is the cytoplasm. It catalyses the reaction tRNA(Val) + L-valine + ATP = L-valyl-tRNA(Val) + AMP + diphosphate. Catalyzes the attachment of valine to tRNA(Val). As ValRS can inadvertently accommodate and process structurally similar amino acids such as threonine, to avoid such errors, it has a 'posttransfer' editing activity that hydrolyzes mischarged Thr-tRNA(Val) in a tRNA-dependent manner. The chain is Valine--tRNA ligase from Mesomycoplasma hyopneumoniae (strain 232) (Mycoplasma hyopneumoniae).